Reading from the N-terminus, the 776-residue chain is A-type ATP synthase subunit A (776 aa).

The protein belongs to the ATPase alpha/beta chains family. Has multiple subunits with at least A(3), B(3), C, D, E, F, H, I and proteolipid K(x). Post-translationally, this protein undergoes a protein self splicing that involves a post-translational excision of the VDE intervening region (intein) followed by peptide ligation.

The protein resides in the cell membrane. It catalyses the reaction ATP + H2O + 4 H(+)(in) = ADP + phosphate + 5 H(+)(out). Functionally, component of the A-type ATP synthase that produces ATP from ADP in the presence of a proton gradient across the membrane. The A chain is the catalytic subunit. The sequence is that of A-type ATP synthase subunit A from Thermoplasma volcanium (strain ATCC 51530 / DSM 4299 / JCM 9571 / NBRC 15438 / GSS1).